The primary structure comprises 312 residues: Malate dehydrogenase (312 aa).

NAD(+)-binding positions include 7 to 13 (GAAGGIG) and Asp34. Positions 81 and 87 each coordinate substrate. NAD(+) contacts are provided by residues Asn94 and 117–119 (ITN). Asn119 and Arg153 together coordinate substrate. The Proton acceptor role is filled by His177. Met227 provides a ligand contact to NAD(+).

This sequence belongs to the LDH/MDH superfamily. MDH type 1 family. Homodimer.

It catalyses the reaction (S)-malate + NAD(+) = oxaloacetate + NADH + H(+). Functionally, catalyzes the reversible oxidation of malate to oxaloacetate. In Escherichia coli (strain 55989 / EAEC), this protein is Malate dehydrogenase.